We begin with the raw amino-acid sequence, 362 residues long: G-prodeshotein coupled receptor 4 (362 aa).

The Extracellular portion of the chain corresponds to 1–8 (MGNHTWEG). An N-linked (GlcNAc...) asparagine glycan is attached at Asn3. A helical membrane pass occupies residues 9 to 45 (CHVDSRVDHLFPPSLYIFVIGVGLPTNCLALWAAYRQ). 2 disulfide bridges follow: Cys9–Cys258 and Cys90–Cys168. Topologically, residues 46-49 (VQQR) are cytoplasmic. A helical transmembrane segment spans residues 50-80 (NELGVYLMNLSIADLLYICTLPLWVDYFLHH). The Extracellular portion of the chain corresponds to 81 to 85 (DNWIH). A helical membrane pass occupies residues 86–121 (GPGSCKLFGFIFYTNIYISIAFLCCISVDRYLAVAH). Residues 122-129 (PLRFARLR) lie on the Cytoplasmic side of the membrane. The helical transmembrane segment at 130 to 156 (RVKTAVAVSSVVWATELGANSAPLFHD) threads the bilayer. Topologically, residues 157-172 (ELFRDRYNHTFCFEKF) are extracellular. The tract at residues 157 to 172 (ELFRDRYNHTFCFEKF) is extracellular loop 2 (ECL2). An N-linked (GlcNAc...) asparagine glycan is attached at Asn164. A helical membrane pass occupies residues 173-210 (PMEGWVAWMNLYRVFVGFLFPWALMLLSYRGILRAVRG). Topologically, residues 211-214 (SVST) are cytoplasmic. Residues 215–250 (ERQEKAKIKRLALSLIAIVLVCFAPYHVLLLSRSAI) traverse the membrane as a helical segment. Residues 251–260 (YLGRPWDCGF) lie on the Extracellular side of the membrane. Residues 261-289 (EERVFSAYHSSLAFTSLNCVADPILYCLV) form a helical membrane-spanning segment. The Cytoplasmic portion of the chain corresponds to 290–362 (NEGARSDVAK…VQLKMLPPAQ (73 aa)). A disordered region spans residues 335 to 362 (AKAMTGSWAATPPSQGDQVQLKMLPPAQ).

This sequence belongs to the G-protein coupled receptor 1 family.

The protein localises to the cell membrane. Its activity is regulated as follows. Activated by a network of residues that connects an extracellular-facing cavity to Glu-145, a conserved charged residue buried in the transmembrane core of the receptor. Protonation likely drives conformational changes in extracellular loop 2 (ECL2), which stabilizes movement of transmembrane 3 (TM3) and a series of rearrangements that connect the extracellular-facing cavity to Glu-145, a residue only conserved in proton-sensing G-protein coupled receptors. Functionally, proton-sensing G-protein coupled receptor activated by extracellular pH, which is required to monitor pH changes and generate adaptive reactions. Activated by an optimal pH of 6.8-7.2. Ligand binding causes a conformation change that triggers signaling via guanine nucleotide-binding proteins (G proteins) and modulates the activity of downstream effectors, such as adenylate cyclase. GPR4 is mainly coupled to G(s) G proteins and mediates activation of adenylate cyclase activity. May also couple with G(q) and G(12)/G(13) G proteins. Acts as a key regulator of respiratory sensitivity to CO2/H(+) in brain retrotrapezoid nucleus neurons: acts by mediating detection of protons generated by the formation of carbonic acid in the blood, an important mechanism to impulse to breathe. Also acts as a regulator of acid secretion in the kidney collecting duct by maintaining acid-base homeostasis in the kidney. Acidosis-induced GPR4 activation increases paracellular gap formation and permeability of vascular endothelial cells, possibly through the G(12)/G(13)/Rho GTPase signaling pathway. The chain is G-prodeshotein coupled receptor 4 from Homo sapiens (Human).